Reading from the N-terminus, the 305-residue chain is Dihydroorotate dehydrogenase B (NAD(+)), catalytic subunit (305 aa).

Residues Ser-23 and 47–48 (KG) contribute to the FMN site. Residues Lys-47 and 71–75 (NAIGL) contribute to the substrate site. Asn-101 and Asn-129 together coordinate FMN. Asn-129 contacts substrate. Cys-132 acts as the Nucleophile in catalysis. Residues Lys-167 and Ile-193 each contribute to the FMN site. Substrate is bound at residue 194 to 195 (NT). FMN contacts are provided by residues Gly-219, 245–246 (GG), and 267–268 (GT).

It belongs to the dihydroorotate dehydrogenase family. Type 1 subfamily. Heterotetramer of 2 PyrK and 2 PyrD type B subunits. The cofactor is FMN.

Its subcellular location is the cytoplasm. The enzyme catalyses (S)-dihydroorotate + NAD(+) = orotate + NADH + H(+). Its pathway is pyrimidine metabolism; UMP biosynthesis via de novo pathway; orotate from (S)-dihydroorotate (NAD(+) route): step 1/1. Functionally, catalyzes the conversion of dihydroorotate to orotate with NAD(+) as electron acceptor. This is Dihydroorotate dehydrogenase B (NAD(+)), catalytic subunit (pyrD) from Geobacter metallireducens (strain ATCC 53774 / DSM 7210 / GS-15).